The following is a 373-amino-acid chain: Arfaptin-1 (373 aa).

Positions methionine 1–glutamine 47 are disordered. Alanine 2 is subject to N-acetylalanine. The residue at position 5 (serine 5) is a Phosphoserine. Positions aspartate 22–histidine 35 are enriched in basic and acidic residues. Serine 36, serine 39, serine 69, serine 79, and serine 132 each carry phosphoserine. The AH domain maps to threonine 153–lysine 353. Phosphothreonine is present on threonine 361.

In terms of assembly, forms homodimers or heterodimers with ARFIP2. Interacts with non-myristoylated GTP-bound ARF3, but not to GDP-bound ARF3. Interacts with ARF1. Binds with lower affinity to ARF5 and with very little affinity to ARF6. Interacts with ARL1. Interacts with ATG9A. Post-translationally, phosphorylated by PRKD1; phosphorylation delocalizes ARFIP1 from the Golgi and disrupts its ability to inhibit the activity of ADP-ribosylation factor, an important component of the vesicle scission machinery.

The protein localises to the golgi apparatus. It is found in the trans-Golgi network membrane. In terms of biological role, plays a role in controlling biogenesis of secretory granules at the trans-Golgi network. Mechanistically, binds ARF-GTP at the neck of a growing secretory granule precursor and forms a protective scaffold. Once the granule precursor has been completely loaded, active PRKD1 phosphorylates ARFIP1 and releases it from ARFs. In turn, ARFs induce fission. Through this mechanism, ensures proper secretory granule formation at the Golgi of pancreatic beta cells. The polypeptide is Arfaptin-1 (Mus musculus (Mouse)).